Reading from the N-terminus, the 529-residue chain is Bifunctional purine biosynthesis protein PurH (529 aa).

One can recognise an MGS-like domain in the interval 1–148; it reads MNNARPIRRA…KNHKDTTIIV (148 aa).

This sequence belongs to the PurH family.

The catalysed reaction is (6R)-10-formyltetrahydrofolate + 5-amino-1-(5-phospho-beta-D-ribosyl)imidazole-4-carboxamide = 5-formamido-1-(5-phospho-D-ribosyl)imidazole-4-carboxamide + (6S)-5,6,7,8-tetrahydrofolate. It carries out the reaction IMP + H2O = 5-formamido-1-(5-phospho-D-ribosyl)imidazole-4-carboxamide. It functions in the pathway purine metabolism; IMP biosynthesis via de novo pathway; 5-formamido-1-(5-phospho-D-ribosyl)imidazole-4-carboxamide from 5-amino-1-(5-phospho-D-ribosyl)imidazole-4-carboxamide (10-formyl THF route): step 1/1. It participates in purine metabolism; IMP biosynthesis via de novo pathway; IMP from 5-formamido-1-(5-phospho-D-ribosyl)imidazole-4-carboxamide: step 1/1. This chain is Bifunctional purine biosynthesis protein PurH, found in Shewanella pealeana (strain ATCC 700345 / ANG-SQ1).